Here is a 40-residue protein sequence, read N- to C-terminus: Alpha-conotoxin-like Lp1.6b (40 aa).

The propeptide occupies V1–R23. At Q24 the chain carries Pyrrolidone carboxylic acid. Intrachain disulfides connect C26–C32 and C27–C39.

Belongs to the conotoxin A superfamily. In terms of tissue distribution, expressed by the venom duct.

It is found in the secreted. Alpha-conotoxins act on postsynaptic membranes, they bind to the nicotinic acetylcholine receptors (nAChR) and thus inhibit them. This chain is Alpha-conotoxin-like Lp1.6b, found in Conus leopardus (Leopard cone).